The chain runs to 132 residues: Small ribosomal subunit protein uS8 (132 aa).

Belongs to the universal ribosomal protein uS8 family. Part of the 30S ribosomal subunit. Contacts proteins S5 and S12.

Its function is as follows. One of the primary rRNA binding proteins, it binds directly to 16S rRNA central domain where it helps coordinate assembly of the platform of the 30S subunit. This chain is Small ribosomal subunit protein uS8, found in Borrelia hermsii (strain HS1 / DAH).